The sequence spans 654 residues: Pyoverdine export ATP-binding/permease protein PvdT (654 aa).

One can recognise an ABC transporter domain in the interval 6–245 (IELCDIRKAY…AHKGIQAEEL (240 aa)). Position 43–50 (43–50 (GASGSGKS)) interacts with ATP. The next 4 helical transmembrane spans lie at 282–302 (ALTLLGIIIGVASVVVMLAVG), 529–549 (LSLMLGAIAAISLLVGGIGVM), 584–604 (AIMLSMVGGLTGIALALVVGA), and 614–634 (AFALPAIVGAFACAVITGVVF).

This sequence belongs to the ABC transporter superfamily. Macrolide exporter (TC 3.A.1.122) family. As to quaternary structure, part of the tripartite efflux system PvdRT-OpmQ, which is composed of an inner membrane component with both ATPase and permease domains, PvdT, a periplasmic membrane fusion protein, PvdR, and an outer membrane component, OpmQ.

The protein resides in the cell inner membrane. Has a basal ATPase activity that is stimulated by PvdR. In vitro, interaction with PVD influences the affinity of PvdT to PvdR. Functionally, part of the tripartite efflux system PvdRT-OpmQ required for the secretion into the extracellular milieu of the siderophore pyoverdine (PVD), which is involved in iron acquisition. This subunit binds PVD and drives its secretion by hydrolyzing ATP. The system is responsible for export of newly synthesized PVD after the final steps of biosynthesis have taken place in the periplasm. It is also responsible for recycling of PVD after internalization of ferri-PVD into the periplasm by the outer-membrane receptor FpvA and release of iron from PVD, thus making PVD available for new cycles of iron uptake. Contributes to resistance against ampicillin. In Pseudomonas putida (strain ATCC 47054 / DSM 6125 / CFBP 8728 / NCIMB 11950 / KT2440), this protein is Pyoverdine export ATP-binding/permease protein PvdT.